The sequence spans 305 residues: Glycine--tRNA ligase alpha subunit (305 aa).

It belongs to the class-II aminoacyl-tRNA synthetase family. In terms of assembly, tetramer of two alpha and two beta subunits.

It is found in the cytoplasm. It carries out the reaction tRNA(Gly) + glycine + ATP = glycyl-tRNA(Gly) + AMP + diphosphate. This Streptococcus pyogenes serotype M49 (strain NZ131) protein is Glycine--tRNA ligase alpha subunit.